Here is an 84-residue protein sequence, read N- to C-terminus: Magnetosome protein MamG (84 aa).

The Cytoplasmic portion of the chain corresponds to 1–3 (MIK). A helical transmembrane segment spans residues 4-24 (GIAGVGGTALGVGGGVAAPPV). The Lumenal portion of the chain corresponds to 25–40 (SAAAVGSTLLAGKGVC). Residues 41–48 (LGLGLGLG) are LG repeat. A helical membrane pass occupies residues 41-61 (LGLGLGLGAWGPVLLGVAGLA). Residues 62 to 84 (CAASLCDYLKNRKAQAEASAEPA) are Cytoplasmic-facing.

It belongs to the magnetosome MamG (TC 9.B.95) protein family.

Its subcellular location is the magnetosome membrane. Its function is as follows. Plays a role in regulating magnetite crystal size. The sequence is that of Magnetosome protein MamG from Magnetospirillum gryphiswaldense (strain DSM 6361 / JCM 21280 / NBRC 15271 / MSR-1).